The following is a 258-amino-acid chain: Imidazole glycerol phosphate synthase subunit HisF (258 aa).

Residues D11 and D130 contribute to the active site.

Belongs to the HisA/HisF family. Heterodimer of HisH and HisF.

The protein localises to the cytoplasm. The catalysed reaction is 5-[(5-phospho-1-deoxy-D-ribulos-1-ylimino)methylamino]-1-(5-phospho-beta-D-ribosyl)imidazole-4-carboxamide + L-glutamine = D-erythro-1-(imidazol-4-yl)glycerol 3-phosphate + 5-amino-1-(5-phospho-beta-D-ribosyl)imidazole-4-carboxamide + L-glutamate + H(+). Its pathway is amino-acid biosynthesis; L-histidine biosynthesis; L-histidine from 5-phospho-alpha-D-ribose 1-diphosphate: step 5/9. Functionally, IGPS catalyzes the conversion of PRFAR and glutamine to IGP, AICAR and glutamate. The HisF subunit catalyzes the cyclization activity that produces IGP and AICAR from PRFAR using the ammonia provided by the HisH subunit. This chain is Imidazole glycerol phosphate synthase subunit HisF, found in Azorhizobium caulinodans (strain ATCC 43989 / DSM 5975 / JCM 20966 / LMG 6465 / NBRC 14845 / NCIMB 13405 / ORS 571).